Reading from the N-terminus, the 207-residue chain is Large ribosomal subunit protein uL4 (207 aa).

The interval 49-78 is disordered; the sequence is HAVKNRSAVSGGGRKPWRQKGTGRARQGSI.

Belongs to the universal ribosomal protein uL4 family. As to quaternary structure, part of the 50S ribosomal subunit.

Functionally, one of the primary rRNA binding proteins, this protein initially binds near the 5'-end of the 23S rRNA. It is important during the early stages of 50S assembly. It makes multiple contacts with different domains of the 23S rRNA in the assembled 50S subunit and ribosome. In terms of biological role, forms part of the polypeptide exit tunnel. The sequence is that of Large ribosomal subunit protein uL4 from Streptococcus pneumoniae serotype 19F (strain G54).